Reading from the N-terminus, the 249-residue chain is 5'-nucleotidase SurE (249 aa).

4 residues coordinate a divalent metal cation: Asp-8, Asp-9, Ser-39, and Asn-91.

Belongs to the SurE nucleotidase family. The cofactor is a divalent metal cation.

It localises to the cytoplasm. It carries out the reaction a ribonucleoside 5'-phosphate + H2O = a ribonucleoside + phosphate. Functionally, nucleotidase that shows phosphatase activity on nucleoside 5'-monophosphates. The sequence is that of 5'-nucleotidase SurE from Pseudomonas fluorescens (strain SBW25).